Reading from the N-terminus, the 472-residue chain is Chromosomal replication initiator protein DnaA (472 aa).

Positions 1–73 (MSNMEQDRWS…LSCWQAELPE (73 aa)) are domain I, interacts with DnaA modulators. Positions 73-128 (EVNRVDLTVRSPVRCATPAKEVPAPVESRRDEQRPSAERSNGATPVSANHDALGGS) are domain II. Residues 90–124 (PAKEVPAPVESRRDEQRPSAERSNGATPVSANHDA) are disordered. A compositionally biased stretch (basic and acidic residues) spans 99 to 109 (ESRRDEQRPSA). Polar residues predominate over residues 110–119 (ERSNGATPVS). The tract at residues 129–351 (PLDPRLTFAS…GAINRLLAHS (223 aa)) is domain III, AAA+ region. The ATP site is built by glycine 176, glycine 178, lysine 179, and threonine 180. The domain IV, binds dsDNA stretch occupies residues 352–472 (KLNNQPVTLE…VESLKRQLQE (121 aa)).

The protein belongs to the DnaA family. Oligomerizes as a right-handed, spiral filament on DNA at oriC.

It localises to the cytoplasm. Plays an essential role in the initiation and regulation of chromosomal replication. ATP-DnaA binds to the origin of replication (oriC) to initiate formation of the DNA replication initiation complex once per cell cycle. Binds the DnaA box (a 9 base pair repeat at the origin) and separates the double-stranded (ds)DNA. Forms a right-handed helical filament on oriC DNA; dsDNA binds to the exterior of the filament while single-stranded (ss)DNA is stabiized in the filament's interior. The ATP-DnaA-oriC complex binds and stabilizes one strand of the AT-rich DNA unwinding element (DUE), permitting loading of DNA polymerase. After initiation quickly degrades to an ADP-DnaA complex that is not apt for DNA replication. Binds acidic phospholipids. The sequence is that of Chromosomal replication initiator protein DnaA from Rhodopseudomonas palustris (strain ATCC BAA-98 / CGA009).